Reading from the N-terminus, the 121-residue chain is Two-component response regulator ORR8 (121 aa).

Positions 5–121 constitute a Response regulatory domain; it reads HVLVVDDTHV…VDVPRIMKYI (117 aa). A 4-aspartylphosphate modification is found at D55.

Belongs to the ARR family. Type-A subfamily. Two-component system major event consists of a His-to-Asp phosphorelay between a sensor histidine kinase (HK) and a response regulator (RR). In plants, the His-to-Asp phosphorelay involves an additional intermediate named Histidine-containing phosphotransfer protein (HPt). This multistep phosphorelay consists of a His-Asp-His-Asp sequential transfer of a phosphate group between first a His and an Asp of the HK protein, followed by the transfer to a conserved His of the HPt protein and finally the transfer to an Asp in the receiver domain of the RR protein. In terms of tissue distribution, expressed in mature leaves, and at low levels in roots, shoots and flowers.

Its function is as follows. Functions as a response regulator involved in His-to-Asp phosphorelay signal transduction system. Phosphorylation of the Asp residue in the receiver domain activates the ability of the protein to promote the transcription of target genes. Type-A response regulators seem to act as negative regulators of the cytokinin signaling. In Oryza sativa subsp. indica (Rice), this protein is Two-component response regulator ORR8.